The following is a 247-amino-acid chain: Acetoacetate decarboxylase 1 (247 aa).

The Schiff-base intermediate with acetoacetate role is filled by Lys116.

The protein belongs to the ADC family.

The catalysed reaction is acetoacetate + H(+) = acetone + CO2. In terms of biological role, catalyzes the conversion of acetoacetate to acetone and carbon dioxide. The polypeptide is Acetoacetate decarboxylase 1 (Mesorhizobium japonicum (strain LMG 29417 / CECT 9101 / MAFF 303099) (Mesorhizobium loti (strain MAFF 303099))).